A 395-amino-acid chain; its full sequence is S-adenosylmethionine synthase (395 aa).

His-15 contributes to the ATP binding site. Mg(2+) is bound at residue Asp-17. Glu-43 contributes to the K(+) binding site. L-methionine contacts are provided by Glu-56 and Gln-99. The tract at residues 99 to 109 is flexible loop; the sequence is QSPEIAQGVDR. ATP-binding positions include 164–166, 230–231, Asp-239, 245–246, Ala-262, and Lys-266; these read DAK, RF, and RK. Residue Asp-239 participates in L-methionine binding. Lys-270 lines the L-methionine pocket.

It belongs to the AdoMet synthase family. In terms of assembly, homotetramer; dimer of dimers. The cofactor is Mg(2+). K(+) serves as cofactor.

It localises to the cytoplasm. It catalyses the reaction L-methionine + ATP + H2O = S-adenosyl-L-methionine + phosphate + diphosphate. It functions in the pathway amino-acid biosynthesis; S-adenosyl-L-methionine biosynthesis; S-adenosyl-L-methionine from L-methionine: step 1/1. Functionally, catalyzes the formation of S-adenosylmethionine (AdoMet) from methionine and ATP. The overall synthetic reaction is composed of two sequential steps, AdoMet formation and the subsequent tripolyphosphate hydrolysis which occurs prior to release of AdoMet from the enzyme. In Colwellia psychrerythraea (strain 34H / ATCC BAA-681) (Vibrio psychroerythus), this protein is S-adenosylmethionine synthase.